The chain runs to 473 residues: Zinc transporter SLC39A7 (473 aa).

Residues 11 to 31 form a helical membrane-spanning segment; it reads VAVGLLTWAALGLLVAGHGGH. 2 stretches are compositionally biased toward basic and acidic residues: residues 44–56 and 66–114; these read GHSH…DFHH and HTHE…EHSH. Residues 44–120 form a disordered region; sequence GHSHRHSHED…EHSHGGYGES (77 aa). His66 carries the pros-methylhistidine modification. The next 3 helical transmembrane spans lie at 138–158, 169–189, and 214–234; these read ALGA…LIPV, LQIL…LHLI, and GPIL…LVVE. The disordered stretch occupies residues 243–316; sequence GHEHSHGHGH…QHSGEEKAGS (74 aa). Phosphoserine occurs at positions 278 and 279. Positions 298–316 are enriched in basic and acidic residues; it reads RPKDGPVRPQHSGEEKAGS. The chain crosses the membrane as a helical span at residues 388–408; that stretch reads LLTAVGALAGTAFALLTEGGA. The tract at residues 428–473 is disordered; that stretch reads GDQAATQASPRSTSLPPVGEEDFREDPGPRQKGQQEKSGINVNCVS. Residues 431–442 are compositionally biased toward polar residues; that stretch reads AATQASPRSTSL. Positions 452–462 are enriched in basic and acidic residues; the sequence is EDPGPRQKGQQ. Positions 463–473 are enriched in polar residues; sequence EKSGINVNCVS.

This sequence belongs to the ZIP transporter (TC 2.A.5) family. KE4/Catsup subfamily. In terms of assembly, homodimer. In terms of processing, methylation at some His residue by METTL9 leads to reduced zinc-binding. Post-translationally, rapidly phosphorylated by CK2 following Zn(2+) treatment. This phosphorylation is required for efficient cytosolic Zn(2+) release.

Its subcellular location is the endoplasmic reticulum membrane. It localises to the golgi apparatus. The protein resides in the cis-Golgi network membrane. The catalysed reaction is Zn(2+)(in) = Zn(2+)(out). Functionally, transports Zn(2+) from the endoplasmic reticulum (ER)/Golgi apparatus to the cytosol, playing an essential role in the regulation of cytosolic zinc levels. Acts as a gatekeeper of zinc release from intracellular stores, requiring post-translational activation by phosphorylation on residues, resulting in activation of multiple downstream pathways leading to cell growth and proliferation. Has an essential role in B cell development and is required for proper B cell receptor signaling. Plays an important role in maintaining intestinal epithelial homeostasis and skin dermis development by regulating ER function. Controls cell signaling pathways involved in glucose metabolism in skeletal muscle. Has a protective role against ER stress in different biological contexts. Mediates Zn(2+)-induced ferroptosis. The polypeptide is Zinc transporter SLC39A7 (SLC39A7) (Sus scrofa (Pig)).